The chain runs to 497 residues: tRNA-2-methylthio-N(6)-dimethylallyladenosine synthase (497 aa).

Positions 44-161 constitute an MTTase N-terminal domain; sequence KKVFVTTQGC…LPELYDQSHQ (118 aa). Residues C53, C90, C124, C205, C209, and C212 each contribute to the [4Fe-4S] cluster site. Residues 191–423 form the Radical SAM core domain; sequence RVEGFKAFVS…QKVIIDSTLA (233 aa). Residues 426–494 enclose the TRAM domain; the sequence is HEMVGTTTRV…PHMVKGEIEA (69 aa).

Belongs to the methylthiotransferase family. MiaB subfamily. In terms of assembly, monomer. The cofactor is [4Fe-4S] cluster.

It is found in the cytoplasm. The enzyme catalyses N(6)-dimethylallyladenosine(37) in tRNA + (sulfur carrier)-SH + AH2 + 2 S-adenosyl-L-methionine = 2-methylsulfanyl-N(6)-dimethylallyladenosine(37) in tRNA + (sulfur carrier)-H + 5'-deoxyadenosine + L-methionine + A + S-adenosyl-L-homocysteine + 2 H(+). Its function is as follows. Catalyzes the methylthiolation of N6-(dimethylallyl)adenosine (i(6)A), leading to the formation of 2-methylthio-N6-(dimethylallyl)adenosine (ms(2)i(6)A) at position 37 in tRNAs that read codons beginning with uridine. This chain is tRNA-2-methylthio-N(6)-dimethylallyladenosine synthase, found in Psychrobacter cryohalolentis (strain ATCC BAA-1226 / DSM 17306 / VKM B-2378 / K5).